Here is a 195-residue protein sequence, read N- to C-terminus: PRS fimbrial minor pilin protein (195 aa).

Positions 1 to 22 are cleaved as a signal peptide; sequence MRLRFSVPLFFFGCVFVHGVFA. Residues cysteine 58 and cysteine 97 are joined by a disulfide bond.

The protein belongs to the fimbrial protein family.

It localises to the secreted. It is found in the fimbrium. In terms of biological role, fimbriae (also called pili), polar filaments radiating from the surface of the bacterium to a length of 0.5-1.5 micrometers and numbering 100-300 per cell, enable bacteria to colonize the epithelium of specific host organs. Functionally, seems to anchor the pilus to the bacterial cell. In addition the stoichiometric relationship between PrsH and PrsA determines the pilus length. The protein is PRS fimbrial minor pilin protein (prsH) of Escherichia coli.